The chain runs to 227 residues: Ornithine decarboxylase antizyme 1 (227 aa).

This sequence belongs to the ODC antizyme family. In terms of assembly, interacts with ODC1 and thereby sterically blocks ODC homodimerization. Forms a ternary complex with PSMB4 and OAZ1 before PSMB4 is incorporated into the 20S proteasome. Interacts with AZIN2; this interaction disrupts the interaction between the antizyme and ODC1. Interacts with FAM171A1.

Functionally, ornithine decarboxylase (ODC) antizyme protein that negatively regulates ODC activity and intracellular polyamine biosynthesis and uptake in response to increased intracellular polyamine levels. Binds to ODC monomers, inhibiting the assembly of the functional ODC homodimer, and targets the monomers for ubiquitin-independent proteolytic destruction by the 26S proteasome. Triggers ODC degradation by inducing the exposure of a cryptic proteasome-interacting surface of ODC. Stabilizes AZIN2 by interfering with its ubiquitination. Also inhibits cellular uptake of polyamines by inactivating the polyamine uptake transporter. SMAD1/OAZ1/PSMB4 complex mediates the degradation of the CREBBP/EP300 repressor SNIP1. Involved in the translocation of AZIN2 from ER-Golgi intermediate compartment (ERGIC) to the cytosol. The sequence is that of Ornithine decarboxylase antizyme 1 (Oaz1) from Rattus norvegicus (Rat).